We begin with the raw amino-acid sequence, 387 residues long: tRNA pseudouridine synthase B (387 aa).

Asp43 (nucleophile) is an active-site residue.

The protein belongs to the pseudouridine synthase TruB family. Type 1 subfamily.

The catalysed reaction is uridine(55) in tRNA = pseudouridine(55) in tRNA. Responsible for synthesis of pseudouridine from uracil-55 in the psi GC loop of transfer RNAs. The polypeptide is tRNA pseudouridine synthase B (Bifidobacterium longum (strain DJO10A)).